Here is a 297-residue protein sequence, read N- to C-terminus: 4-diphosphocytidyl-2-C-methyl-D-erythritol kinase (297 aa).

Active-site residues include Lys6 and Asp144.

Belongs to the GHMP kinase family. IspE subfamily.

The enzyme catalyses 4-CDP-2-C-methyl-D-erythritol + ATP = 4-CDP-2-C-methyl-D-erythritol 2-phosphate + ADP + H(+). It functions in the pathway isoprenoid biosynthesis; isopentenyl diphosphate biosynthesis via DXP pathway; isopentenyl diphosphate from 1-deoxy-D-xylulose 5-phosphate: step 3/6. Catalyzes the phosphorylation of the position 2 hydroxy group of 4-diphosphocytidyl-2C-methyl-D-erythritol. This chain is 4-diphosphocytidyl-2-C-methyl-D-erythritol kinase, found in Leptospira interrogans serogroup Icterohaemorrhagiae serovar Lai (strain 56601).